A 288-amino-acid polypeptide reads, in one-letter code: MKLPIFIADAFTARAFRGDPAAVCLLENELDEDMHQKIAREMNLSETAFIRKLHPTDNFAQSSCFGLRWFTPASEVPLCGHATLASAAVLFHKIKNMTSMLTFVTLSGELRARRAEDGIILDFPLYPAHPQDFHEVEDLIKTAIGNTLVQDICYSPDTRKLLIRLSDVYDRSFLENLKVNTENLLQVENTGKVKGLILTLKGEPGGQTQAFDFYSRYFAPWVAVAEDPVTGSAHAVLSSYWSQHLGKKEMHAFQCSRRGGELGISLRPDGRVDITGSAAVVLEGTLTV.

E46 is a catalytic residue.

This sequence belongs to the PhzF family. In terms of assembly, interacts with UNRIP/MAWD.

The polypeptide is Phenazine biosynthesis-like domain-containing protein (PBLD) (Pongo abelii (Sumatran orangutan)).